Consider the following 253-residue polypeptide: MRLVIATCSVDYVGRLTAHLPKATRLLMVKADGSVSVHADDRAYKPLNWMTPPCTLTVHPIAIDDPDTDFTDGSSVGNSEEQGTDGSAHTAHEEELWVVENKKGEQLRITVHDKISDTTYDLGEDPGLTKDGVEAHLQELLAQHPEALGEGFTLVRREYPTPIGPVDILTRDASGKTVAVEVKRRGGIDGVEQLTRYVELLNRDEILAPVQGLFAAQEIKPQARTLAEDRGFTCVTVDYDELRGTPSQELRLF.

The interval 63–91 is disordered; the sequence is IDDPDTDFTDGSSVGNSEEQGTDGSAHTA. A compositionally biased stretch (polar residues) spans 71–87; the sequence is TDGSSVGNSEEQGTDGS.

The protein belongs to the NucS endonuclease family.

It localises to the cytoplasm. Functionally, cleaves both 3' and 5' ssDNA extremities of branched DNA structures. The polypeptide is Endonuclease NucS (Corynebacterium kroppenstedtii (strain DSM 44385 / JCM 11950 / CIP 105744 / CCUG 35717)).